The primary structure comprises 326 residues: tRNA uridine(34) hydroxylase (326 aa).

Residues 123 to 217 (ADPEVFVVDT…YLEEVPQEES (95 aa)) enclose the Rhodanese domain. Catalysis depends on cysteine 177, which acts as the Cysteine persulfide intermediate. Basic and acidic residues predominate over residues 278–288 (QVERFREREKQ). The disordered stretch occupies residues 278 to 326 (QVERFREREKQVSLANQRGEQHVGGESAKQRAQRREAKLAKKAAQRKQA). Residues 317–326 (AKKAAQRKQA) are compositionally biased toward basic residues.

The protein belongs to the TrhO family.

The catalysed reaction is uridine(34) in tRNA + AH2 + O2 = 5-hydroxyuridine(34) in tRNA + A + H2O. Its function is as follows. Catalyzes oxygen-dependent 5-hydroxyuridine (ho5U) modification at position 34 in tRNAs. This is tRNA uridine(34) hydroxylase from Vibrio parahaemolyticus serotype O3:K6 (strain RIMD 2210633).